A 757-amino-acid chain; its full sequence is Transcription factor FBD3 (757 aa).

The interval 1-24 is disordered; the sequence is MSSKRLSQNEQEKSPGTGPPTHKR. The segment at residues 31–58 is a DNA-binding region (zn(2)-C6 fungal-type); it reads CNACRMRKSRCDGHRPSCSSCLSLGVNC. 2 disordered regions span residues 106 to 161 and 202 to 222; these read GGTD…DANT and VAPS…TDVP. The segment covering 111-120 has biased composition (basic and acidic residues); it reads NNHHNNHDSP. Polar residues predominate over residues 125–135; the sequence is TIAQSITSSRP.

The protein localises to the nucleus. In terms of biological role, transcription factor; part of the Fusarium detoxification of benzoxazolinone cluster involved in the degradation of benzoxazolinones produced by the host plant. Maize, wheat, and rye produce the 2 benzoxazinone phytoanticipins 2,4-dihy-droxy-7-methoxy-1,4-benzoxazin-3-one (DIMBOA) and 2,4-dihydroxy-1,4-benzoxazin-3-one (DIBOA) that, due to their inherent instability once released, spontaneously degrade to the more stable corresponding benzoxazolinones, 6-methoxy-2-benzoxazolinone (MBOA) and 2-benzoxazolinone (BOA), respectively. FDB3 controls the transcription of the FDB gene cluster in response to 6-methoxy-2-benzoxazolinone (MBOA). The chain is Transcription factor FBD3 from Fusarium pseudograminearum (strain CS3096) (Wheat and barley crown-rot fungus).